Here is a 112-residue protein sequence, read N- to C-terminus: uncharacterized protein (112 aa).

The disordered stretch occupies residues 91-112 (ENQRKKGTRKRRSSEVDSKEKS). A compositionally biased stretch (basic and acidic residues) spans 103–112 (SSEVDSKEKS).

This is an uncharacterized protein from Caenorhabditis elegans.